We begin with the raw amino-acid sequence, 165 residues long: Large ribosomal subunit protein uL10 (165 aa).

Belongs to the universal ribosomal protein uL10 family. In terms of assembly, part of the ribosomal stalk of the 50S ribosomal subunit. The N-terminus interacts with L11 and the large rRNA to form the base of the stalk. The C-terminus forms an elongated spine to which L12 dimers bind in a sequential fashion forming a multimeric L10(L12)X complex.

In terms of biological role, forms part of the ribosomal stalk, playing a central role in the interaction of the ribosome with GTP-bound translation factors. The protein is Large ribosomal subunit protein uL10 of Buchnera aphidicola subsp. Acyrthosiphon pisum (strain 5A).